A 147-amino-acid chain; its full sequence is Protein PBDC1 homolog (147 aa).

This sequence belongs to the PBDC1 family.

It localises to the cytoplasm. The protein localises to the nucleus. The chain is Protein PBDC1 homolog from Schizosaccharomyces pombe (strain 972 / ATCC 24843) (Fission yeast).